Consider the following 508-residue polypeptide: Cyclic AMP-responsive element-binding protein 5 (508 aa).

The C2H2-type zinc finger occupies 16-40 (FVCSAPGCSQRFPTEDHLMIHRHKH). Lysine 50 participates in a covalent cross-link: Glycyl lysine isopeptide (Lys-Gly) (interchain with G-Cter in SUMO2). Phosphothreonine is present on residues threonine 59 and threonine 61. Phosphoserine is present on serine 137. The interval 265-391 (RQDQTPHHHM…LERNRAAATR (127 aa)) is disordered. Composition is skewed to basic residues over residues 271–280 (HHHMHSHPHQ) and 289–326 (PYPH…HPAH). Polar residues predominate over residues 337–346 (TGNQAQVSPA). A compositionally biased stretch (low complexity) spans 347 to 357 (TQQMQPTQTIQ). The span at 369–386 (VVDEDPDERRRKFLERNR) shows a compositional bias: basic and acidic residues. The bZIP domain maps to 375 to 438 (DERRRKFLER…AQLKQLLLTH (64 aa)). The segment at 377–397 (RRRKFLERNRAAATRCRQKRK) is basic motif. Residues 403–431 (LEKKAEELTQTNMQLQNEVSMLKNEVAQL) form a leucine-zipper region. The interval 449–468 (ESQGYLSPESSPPASPVPAC) is disordered.

It belongs to the bZIP family. In terms of assembly, binds DNA as a homodimer or as a heterodimer with JUN or ATF2/CREBP1.

It is found in the nucleus. Its function is as follows. Binds to the cAMP response element and activates transcription. The chain is Cyclic AMP-responsive element-binding protein 5 (CREB5) from Homo sapiens (Human).